The chain runs to 85 residues: Large ribosomal subunit protein bL27 (85 aa).

It belongs to the bacterial ribosomal protein bL27 family.

The sequence is that of Large ribosomal subunit protein bL27 from Pseudomonas fluorescens (strain ATCC BAA-477 / NRRL B-23932 / Pf-5).